The following is a 476-amino-acid chain: Sedoheptulokinase (476 aa).

The protein belongs to the FGGY kinase family.

It is found in the cytoplasm. It catalyses the reaction sedoheptulose + ATP = D-sedoheptulose 7-phosphate + ADP + H(+). In terms of biological role, acts as a modulator of macrophage activation through control of glucose metabolism. In Mus musculus (Mouse), this protein is Sedoheptulokinase (Shpk).